The sequence spans 245 residues: PF03932 family protein CutC (245 aa).

It belongs to the CutC family.

The protein localises to the cytoplasm. This chain is PF03932 family protein CutC, found in Photobacterium profundum (strain SS9).